Consider the following 287-residue polypeptide: 1-acyl-sn-glycerol-3-phosphate acyltransferase alpha (287 aa).

An N-terminal signal peptide occupies residues 1–26; the sequence is MELWPGAGTLLLLLFLLLLLLLPTLW. At 27–37 the chain is on the lumenal side; that stretch reads FCSPSAKYFFK. The chain crosses the membrane as a helical span at residues 38 to 58; that stretch reads MAFYNGWILFLAVLAIPVCAV. Residues 59–127 lie on the Cytoplasmic side of the membrane; sequence RGRNVENMKI…PGRCVPIAKR (69 aa). The HXXXXD motif signature appears at 104 to 109; that stretch reads HQSSLD. A helical transmembrane segment spans residues 128-148; that stretch reads ELLWAGSAGLACWLAGVIFID. Residues 149–287 lie on the Lumenal side of the membrane; sequence RKRTGDAISV…KPGGVGEAGL (139 aa). Positions 178-181 match the EGTR motif motif; that stretch reads EGTR.

The protein belongs to the 1-acyl-sn-glycerol-3-phosphate acyltransferase family.

It is found in the endoplasmic reticulum membrane. The enzyme catalyses a 1-acyl-sn-glycero-3-phosphate + an acyl-CoA = a 1,2-diacyl-sn-glycero-3-phosphate + CoA. The catalysed reaction is 1-(9Z-octadecenoyl)-sn-glycero-3-phosphate + (9Z)-octadecenoyl-CoA = 1,2-di-(9Z-octadecenoyl)-sn-glycero-3-phosphate + CoA. It carries out the reaction 1-(9Z-octadecenoyl)-sn-glycero-3-phosphate + hexadecanoyl-CoA = 1-(9Z)-octadecenoyl-2-hexadecanoyl-sn-glycero-3-phosphate + CoA. It catalyses the reaction heptadecanoyl-CoA + 1-(9Z-octadecenoyl)-sn-glycero-3-phosphate = 1-(9Z)-octadecenoyl-2-heptadecanoyl-sn-glycero-3-phosphate + CoA. The enzyme catalyses 1-(9Z-octadecenoyl)-sn-glycero-3-phosphate + octadecanoyl-CoA = 1-(9Z-octadecenoyl)-2-octadecanoyl-sn-glycero-3-phosphate + CoA. The catalysed reaction is 1-(9Z-octadecenoyl)-sn-glycero-3-phosphate + (9Z,12Z)-octadecadienoyl-CoA = 1-(9Z)-octadecenoyl-2-(9Z,12Z)-octadecadienoyl-sn-glycero-3-phosphate + CoA. It carries out the reaction 1-(9Z-octadecenoyl)-sn-glycero-3-phosphate + tetradecanoyl-CoA = 1-(9Z)-octadecenoyl-2-tetradecanoyl-sn-glycero-3-phosphate + CoA. It catalyses the reaction pentadecanoyl-CoA + 1-(9Z-octadecenoyl)-sn-glycero-3-phosphate = 1-(9Z)-octadecenoyl-2-pentadecanoyl-sn-glycero-3-phosphate + CoA. The enzyme catalyses 1-hexadecanoyl-sn-glycero-3-phosphate + (9Z)-octadecenoyl-CoA = 1-hexadecanoyl-2-(9Z-octadecenoyl)-sn-glycero-3-phosphate + CoA. The catalysed reaction is 1-(9Z,12Z,15Z)-octadecatrienoyl-sn-glycero-3-phosphate + (9Z)-octadecenoyl-CoA = 1-(9Z,12Z,15Z)-octadecatrienoyl-2-(9Z)-octadecenoyl-sn-glycero-3-phosphate + CoA. It carries out the reaction 1-(6Z,9Z,12Z-octadecatrienoyl)-sn-glycero-3-phosphate + (9Z)-octadecenoyl-CoA = (6Z,9Z,12Z)-octadecatrienoyl-2-(9Z)-octadecenoyl-sn-glycero-3-phosphate + CoA. It catalyses the reaction 1-eicosanoyl-sn-glycero-3-phosphate + (9Z)-octadecenoyl-CoA = 1-eicosanoyl-2-(9Z)-octadecenoyl-sn-glycero-3-phosphate + CoA. The enzyme catalyses 1-tetradecanoyl-sn-glycerol 3-phosphate + (9Z)-octadecenoyl-CoA = 1-tetradecanoyl-2-(9Z)-octadecenoyl-sn-glycero-3-phosphate + CoA. The catalysed reaction is 1-(9Z-octadecenoyl)-sn-glycero-3-phosphate + (5Z,8Z,11Z,14Z)-eicosatetraenoyl-CoA = 1-(9Z)-octadecenoyl-2-(5Z,8Z,11Z,14Z)-eicosatetraenoyl-sn-glycero-3-phosphate + CoA. It carries out the reaction 1-(9Z-octadecenoyl)-sn-glycero-3-phosphate + dodecanoyl-CoA = 1-(9Z)-octadecenoyl-2-dodecanoyl-sn-glycero-3-phosphate + CoA. It catalyses the reaction (6Z)-octadecenoyl-CoA + 1-(9Z-octadecenoyl)-sn-glycero-3-phosphate = 1-(9Z)-octadecenoyl-2-(6Z)-octadecenoyl-sn-glycero-3-phosphate + CoA. The enzyme catalyses (11Z)-octadecenoyl-CoA + 1-(9Z-octadecenoyl)-sn-glycero-3-phosphate = 1-(9Z)-octadecenoyl-2-(11Z)-octadecenoyl-sn-glycero-3-phosphate + CoA. The catalysed reaction is (9Z)-hexadecenoyl-CoA + 1-(9Z-octadecenoyl)-sn-glycero-3-phosphate = 1-(9Z-octadecenoyl)-2-(9Z-hexadecenoyl)-sn-glycero-3-phosphate + CoA. The protein operates within phospholipid metabolism; CDP-diacylglycerol biosynthesis; CDP-diacylglycerol from sn-glycerol 3-phosphate: step 2/3. In terms of biological role, converts 1-acyl-sn-glycerol-3-phosphate (lysophosphatidic acid or LPA) into 1,2-diacyl-sn-glycerol-3-phosphate (phosphatidic acid or PA) by incorporating an acyl moiety at the sn-2 position of the glycerol backbone. This chain is 1-acyl-sn-glycerol-3-phosphate acyltransferase alpha (AGPAT1), found in Bos taurus (Bovine).